Here is a 219-residue protein sequence, read N- to C-terminus: Interleukin-6 (219 aa).

An N-terminal signal peptide occupies residues 1–20 (MNSSTRYLSLLSALVVLVKG). Cysteine 103 and cysteine 111 form a disulfide bridge.

Belongs to the IL-6 superfamily. Component of a hexamer of two molecules each of IL6, IL6R and IL6ST; first binds to IL6R to associate with the signaling subunit IL6ST. Expressed in spleen, gill and gastrointestinal tract, ovary and brain. Highest expression in ovary.

The protein localises to the secreted. Cytokine with a wide variety of biological functions in immunity, tissue regeneration, and metabolism. Binds to IL6R, then the complex associates to the signaling subunit IL6ST/gp130 to trigger the intracellular IL6-signaling pathway. The interaction with the membrane-bound IL6R and IL6ST stimulates 'classic signaling', whereas the binding of IL6 and soluble IL6R to IL6ST stimulates 'trans-signaling'. Alternatively, 'cluster signaling' occurs when membrane-bound IL6:IL6R complexes on transmitter cells activate IL6ST receptors on neighboring receiver cells. This is Interleukin-6 (il6) from Oncorhynchus mykiss (Rainbow trout).